Reading from the N-terminus, the 1601-residue chain is Ectopic P granules protein 5 (1601 aa).

The interval 1-109 (MAELVRPKKP…EAPPIPARNL (109 aa)) is disordered. Positions 15 to 26 (RPQSDDAPRIPD) are enriched in basic and acidic residues.

The protein belongs to the EPG5 family.

It is found in the cytoplasm. Its function is as follows. Involved in autophagy. Has a role in the degradation of protein aggregates within autophagosomes. Essential for starvation-induced autotrophy and omegasome development. In Caenorhabditis briggsae, this protein is Ectopic P granules protein 5 (epg-5).